Consider the following 383-residue polypeptide: Corticosteroid-binding globulin (383 aa).

N-linked (GlcNAc...) asparagine glycosylation is found at asparagine 74 and asparagine 154. Residue glutamine 232 participates in cortisol binding. N-linked (GlcNAc...) asparagine glycosylation is present at asparagine 238. Glutamine 264 lines the cortisol pocket. Asparagine 308 carries N-linked (GlcNAc...) asparagine glycosylation. Tryptophan 371 lines the cortisol pocket.

This sequence belongs to the serpin family. In terms of tissue distribution, produced and secreted by hepatocytes, but has also been identified in a number of glycocorticoid responsive cells (it is found in maternal lung, spleen, and ovary and fetal kidney).

Its subcellular location is the secreted. Major transport protein for glucocorticoids and progestins in the blood of almost all vertebrate species. This chain is Corticosteroid-binding globulin (SERPINA6), found in Oryctolagus cuniculus (Rabbit).